The chain runs to 535 residues: MASTSTASATAMAGAFAAAGVNKPRGSAACPRVPAGGRQRLSCVVRCDAGPGVPAQMAAMAASVAALEQFKISADRYMKEKSSIAVIGLSIHTAPVEMREKLAVAEELWPRAVAELTNLNHIEKAAVLSPCNRMEIYVVALSWNRGIREIVDWMSMKSGIPAVELREHLFMFRDSDATRHLFEVSSGLDSLVLGEGQILAQVKQVVRSGQNSGGLGKNIDRMFKDAITAGKRVRSETNISCGAVSVSSAAVELALMKLPKSECLSARMLLIGAGKMGRLVAKHLAAKGCKKVVIVNRSVERVDAIREEMQGIEIVYRSLTEMYEAAADADVVFTSTSSESPLFTKEHAEALPPVSGALGGVRLFVDISVPRNVSACVSDVGHARVYNVDDLKEVVEANKEDRLRKAMEAQTIISEELKRFEAWRDSMETVPTIKKLRSYADRVRASELDKCLQKIGEDALTKKMRRSIEQLSTGIVNRLLHGPLQHLRCDGTDNRTLDETLENMHALNRMFGLDTEKAVMEQKIKTKVEKQKTQN.

Cys-131 acts as the Nucleophile in catalysis. Residues 131–133 (CNR), Ser-190, 195–197 (EGQ), and Gln-201 contribute to the substrate site. 272 to 277 (GAGKMG) serves as a coordination point for NADP(+).

Belongs to the glutamyl-tRNA reductase family. As to expression, primarily expressed in roots.

The protein localises to the plastid. It localises to the chloroplast. It catalyses the reaction (S)-4-amino-5-oxopentanoate + tRNA(Glu) + NADP(+) = L-glutamyl-tRNA(Glu) + NADPH + H(+). The protein operates within porphyrin-containing compound metabolism; protoporphyrin-IX biosynthesis; 5-aminolevulinate from L-glutamyl-tRNA(Glu): step 1/2. Its function is as follows. Catalyzes the NADPH-dependent reduction of glutamyl-tRNA(Glu) to glutamate 1-semialdehyde (GSA). This Hordeum vulgare (Barley) protein is Glutamyl-tRNA reductase 3, chloroplastic (HEMA3).